Consider the following 230-residue polypeptide: Small ribosomal subunit protein uS3 (230 aa).

In terms of domain architecture, KH type-2 spans 39–107 (VRKFLEKKLE…PAQINIAEIR (69 aa)).

It belongs to the universal ribosomal protein uS3 family. As to quaternary structure, part of the 30S ribosomal subunit. Forms a tight complex with proteins S10 and S14.

Its function is as follows. Binds the lower part of the 30S subunit head. Binds mRNA in the 70S ribosome, positioning it for translation. The sequence is that of Small ribosomal subunit protein uS3 from Shewanella amazonensis (strain ATCC BAA-1098 / SB2B).